The following is a 94-amino-acid chain: Translation initiation factor 1A 2 (94 aa).

Residues G6–S80 form the S1-like domain.

Belongs to the eIF-1A family.

Its function is as follows. Seems to be required for maximal rate of protein biosynthesis. Enhances ribosome dissociation into subunits and stabilizes the binding of the initiator Met-tRNA(I) to 40 S ribosomal subunits. This is Translation initiation factor 1A 2 (eIF1A2) from Halobacterium salinarum (strain ATCC 700922 / JCM 11081 / NRC-1) (Halobacterium halobium).